The primary structure comprises 306 residues: MELKDYYAIMGVKPTDDLKTIKTAYRRLARKYHPDVSKEPNAEARFKEVAEAWEVLSDEQRRAEYDQLWQHRNDPQFNRQFQQHEGQPYNAEDFDDIFSSIFGQHGRHSHHRHAARGHDIEIEVAVFLEETLEEHQRTISYSVPVYNAFGLVEREIPKTLNVKIPAGVSNGQRIRLKGQGTPGENGGPNGDLWLVIHIAPHPLFDIVNQDLEVVLPLAPWEAALGAKVSVPTLKERILLTIPPGSQAGQRLRIKGKGLASKKHTGDLYAIIKIVMPPKPDEKTAALWQQLADAQSSFDPRQQWGKA.

A J domain is found at 5 to 69; sequence DYYAIMGVKP…QRRAEYDQLW (65 aa).

The protein resides in the cytoplasm. The protein localises to the nucleoid. Its function is as follows. DNA-binding protein that preferentially recognizes a curved DNA sequence. It is probably a functional analog of DnaJ; displays overlapping activities with DnaJ, but functions under different conditions, probably acting as a molecular chaperone in an adaptive response to environmental stresses other than heat shock. Lacks autonomous chaperone activity; binds native substrates and targets them for recognition by DnaK. Its activity is inhibited by the binding of CbpM. This is Curved DNA-binding protein from Salmonella choleraesuis (strain SC-B67).